The following is a 223-amino-acid chain: Small ribosomal subunit protein uS5 (223 aa).

The interval 1 to 66 (MPPQQQRGRG…AERAQAETEF (66 aa)) is disordered. A compositionally biased stretch (gly residues) spans 13–22 (RGPGGPGGPG). The segment covering 53–66 (GGDKAERAQAETEF) has biased composition (basic and acidic residues). The S5 DRBM domain maps to 66-129 (FQERVVQIRR…SDARKALIRV (64 aa)).

It belongs to the universal ribosomal protein uS5 family. In terms of assembly, part of the 30S ribosomal subunit. Contacts proteins S4 and S8.

Functionally, with S4 and S12 plays an important role in translational accuracy. Its function is as follows. Located at the back of the 30S subunit body where it stabilizes the conformation of the head with respect to the body. In Gloeobacter violaceus (strain ATCC 29082 / PCC 7421), this protein is Small ribosomal subunit protein uS5.